The sequence spans 459 residues: Elongation factor 1-alpha 1 (459 aa).

A tr-type G domain is found at 5-242 (KTHINIVVIG…DCIIPPQRPT (238 aa)). Positions 14–21 (GHVDSGKS) are G1. The segment at 70-74 (GITID) is G2. The tract at residues 91-94 (DAPG) is G3. Residues 153–156 (NKMD) form a G4 region. The tract at residues 194 to 196 (SGF) is G5. 5-glutamyl glycerylphosphorylethanolamine is present on residues glutamate 301 and glutamate 374.

Belongs to the TRAFAC class translation factor GTPase superfamily. Classic translation factor GTPase family. EF-Tu/EF-1A subfamily.

The protein localises to the cytoplasm. This protein promotes the GTP-dependent binding of aminoacyl-tRNA to the A-site of ribosomes during protein biosynthesis. This is Elongation factor 1-alpha 1 (eft-1) from Oscheius tipulae.